Reading from the N-terminus, the 119-residue chain is Protein TusC (119 aa).

Belongs to the DsrF/TusC family. In terms of assembly, heterohexamer, formed by a dimer of trimers. The hexameric TusBCD complex contains 2 copies each of TusB, TusC and TusD. The TusBCD complex interacts with TusE.

It localises to the cytoplasm. Its function is as follows. Part of a sulfur-relay system required for 2-thiolation of 5-methylaminomethyl-2-thiouridine (mnm(5)s(2)U) at tRNA wobble positions. This chain is Protein TusC, found in Escherichia coli O45:K1 (strain S88 / ExPEC).